The following is a 138-amino-acid chain: Large ribosomal subunit protein uL16 (138 aa).

The segment covering 1-13 (MLQPARRKYRKEQ) has biased composition (basic residues). Positions 1–20 (MLQPARRKYRKEQKGRNTGV) are disordered.

It belongs to the universal ribosomal protein uL16 family. Part of the 50S ribosomal subunit.

Binds 23S rRNA and is also seen to make contacts with the A and possibly P site tRNAs. The sequence is that of Large ribosomal subunit protein uL16 from Verminephrobacter eiseniae (strain EF01-2).